The following is a 182-amino-acid chain: NAD(P)H-quinone oxidoreductase subunit I, chloroplastic (182 aa).

4Fe-4S ferredoxin-type domains are found at residues 52 to 81 and 92 to 121; these read GRIH…VDWE and KSYS…MTEE. Residues cysteine 61, cysteine 64, cysteine 67, cysteine 71, cysteine 101, cysteine 104, cysteine 107, and cysteine 111 each contribute to the [4Fe-4S] cluster site.

This sequence belongs to the complex I 23 kDa subunit family. As to quaternary structure, NDH is composed of at least 16 different subunits, 5 of which are encoded in the nucleus. Requires [4Fe-4S] cluster as cofactor.

The protein localises to the plastid. It is found in the chloroplast thylakoid membrane. It carries out the reaction a plastoquinone + NADH + (n+1) H(+)(in) = a plastoquinol + NAD(+) + n H(+)(out). The enzyme catalyses a plastoquinone + NADPH + (n+1) H(+)(in) = a plastoquinol + NADP(+) + n H(+)(out). Its function is as follows. NDH shuttles electrons from NAD(P)H:plastoquinone, via FMN and iron-sulfur (Fe-S) centers, to quinones in the photosynthetic chain and possibly in a chloroplast respiratory chain. The immediate electron acceptor for the enzyme in this species is believed to be plastoquinone. Couples the redox reaction to proton translocation, and thus conserves the redox energy in a proton gradient. This chain is NAD(P)H-quinone oxidoreductase subunit I, chloroplastic, found in Chaetosphaeridium globosum (Charophycean green alga).